Consider the following 434-residue polypeptide: D-inositol 3-phosphate glycosyltransferase (434 aa).

Position 19 (H19) interacts with 1D-myo-inositol 3-phosphate. UDP-N-acetyl-alpha-D-glucosamine is bound by residues 25 to 26 (QP) and G33. 1D-myo-inositol 3-phosphate is bound by residues 30-35 (DAGGMN), K88, Y121, T145, and R165. UDP-N-acetyl-alpha-D-glucosamine is bound by residues R239, K244, and Q297. Mg(2+)-binding residues include Y306, R307, and A309. Residues E319 and E327 each coordinate UDP-N-acetyl-alpha-D-glucosamine. T333 lines the Mg(2+) pocket. Positions 414–434 (HPRPAARRSGRRFSMRRGVRT) are disordered.

It belongs to the glycosyltransferase group 1 family. MshA subfamily. In terms of assembly, homodimer.

It carries out the reaction 1D-myo-inositol 3-phosphate + UDP-N-acetyl-alpha-D-glucosamine = 1D-myo-inositol 2-acetamido-2-deoxy-alpha-D-glucopyranoside 3-phosphate + UDP + H(+). Catalyzes the transfer of a N-acetyl-glucosamine moiety to 1D-myo-inositol 3-phosphate to produce 1D-myo-inositol 2-acetamido-2-deoxy-glucopyranoside 3-phosphate in the mycothiol biosynthesis pathway. The chain is D-inositol 3-phosphate glycosyltransferase (mshA) from Mycolicibacterium smegmatis (strain ATCC 700084 / mc(2)155) (Mycobacterium smegmatis).